Consider the following 471-residue polypeptide: D-hydantoinase (471 aa).

H58, H60, and K150 together coordinate Zn(2+). K150 is subject to N6-carboxylysine. Y155 is a binding site for substrate. H183 and H239 together coordinate Zn(2+). S288 contacts substrate. D315 lines the Zn(2+) pocket. Position 337 (N337) interacts with substrate.

Belongs to the metallo-dependent hydrolases superfamily. Hydantoinase/dihydropyrimidinase family. As to quaternary structure, homotetramer. Zn(2+) is required as a cofactor. The cofactor is Ni(2+). Requires Co(2+) as cofactor. It depends on Mn(2+) as a cofactor. In terms of processing, carboxylation allows a single lysine to coordinate two zinc ions.

With respect to regulation, completely inhibited by p-chloromercuribenzoate and partially inhibited by metal chelating agents. In terms of biological role, catalyzes the stereospecific hydrolysis of the cyclic amide bond of D-hydantoin. Has no activity on dihydropyrimidines. This is D-hydantoinase from Geobacillus stearothermophilus (Bacillus stearothermophilus).